The chain runs to 261 residues: Protein phosphatase inhibitor 2 (261 aa).

Over residues 1–16 (MNKDEEFLEEHHYKDD) the composition is skewed to basic and acidic residues. A required for binding to pppB region spans residues 1 to 150 (MNKDEEFLEE…TPYHYYESEE (150 aa)). The disordered stretch occupies residues 1–261 (MNKDEEFLEE…LNANLSDDEQ (261 aa)). A compositionally biased stretch (acidic residues) spans 17–60 (DAIEGEEEQGEEEESDLDDDMYNIDGETNDDDDDDEAEDEESSE). Over residues 123–134 (LTINDMNKSSTM) the composition is skewed to polar residues. A coiled-coil region spans residues 150-242 (EETDESKKYL…KKFDNLRKAH (93 aa)). Over residues 154–163 (ESKKYLENKF) the composition is skewed to basic and acidic residues. Residues 195 to 206 (DKKKKKKNLKIH) show a composition bias toward basic residues. Residues 212 to 225 (DDNDDNEDEDEDET) are compositionally biased toward acidic residues. Basic and acidic residues predominate over residues 226–250 (EEKKENKKKFDNLRKAHYNEFKVVR).

It belongs to the protein phosphatase inhibitor 2 family. Interacts with pppB.

Functionally, inhibitor of protein-phosphatase 1 (PP1). The protein is Protein phosphatase inhibitor 2 (dpiA) of Dictyostelium discoideum (Social amoeba).